The chain runs to 168 residues: Thiosulfate dehydrogenase [quinone] small subunit (168 aa).

A helical membrane pass occupies residues 6–26 (IIGIIFAILVVGWILATGQWA).

Heterodimer of a large and a small subunit in a 2:2 stoichiometry. TQO may associate with the terminal oxidase formed by doxBCE. Post-translationally, the N-terminus is blocked. Glycosylated.

The protein localises to the cell membrane. The catalysed reaction is 6-decylubiquinone + 2 thiosulfate = 6-decylubiquinol + tetrathionate. With respect to regulation, inhibited by sulfite, metabisulfite and dithonite. Its function is as follows. TQO plays a role in sulfur oxidation and is proposed to couple sulfur oxidation to dioxygen reduction; caldariellaquinone or sulfolobus quinone seem to serve to transfer electrons to the electron transport chain terminal oxidase formed by DoxBCE. The polypeptide is Thiosulfate dehydrogenase [quinone] small subunit (doxA) (Acidianus ambivalens (Desulfurolobus ambivalens)).